The sequence spans 668 residues: UvrABC system protein B (668 aa).

Positions 25-176 (THLQSGHSRQ…DQRQLLRNLA (152 aa)) constitute a Helicase ATP-binding domain. Residue 38-45 (GATGTGKT) coordinates ATP. The short motif at 91–114 (YYDYYQPEAYIPVTDTFIEKTASI) is the Beta-hairpin element. The region spanning 429–591 (QVDDLLAEIQ…ITPQPVKKGS (163 aa)) is the Helicase C-terminal domain. In terms of domain architecture, UVR spans 626 to 661 (PELITQLEAQMKEAAKNLEFEEAAKYRDRIKNLRSK).

The protein belongs to the UvrB family. In terms of assembly, forms a heterotetramer with UvrA during the search for lesions. Interacts with UvrC in an incision complex.

The protein resides in the cytoplasm. Its function is as follows. The UvrABC repair system catalyzes the recognition and processing of DNA lesions. A damage recognition complex composed of 2 UvrA and 2 UvrB subunits scans DNA for abnormalities. Upon binding of the UvrA(2)B(2) complex to a putative damaged site, the DNA wraps around one UvrB monomer. DNA wrap is dependent on ATP binding by UvrB and probably causes local melting of the DNA helix, facilitating insertion of UvrB beta-hairpin between the DNA strands. Then UvrB probes one DNA strand for the presence of a lesion. If a lesion is found the UvrA subunits dissociate and the UvrB-DNA preincision complex is formed. This complex is subsequently bound by UvrC and the second UvrB is released. If no lesion is found, the DNA wraps around the other UvrB subunit that will check the other stand for damage. The chain is UvrABC system protein B from Acaryochloris marina (strain MBIC 11017).